A 37-amino-acid chain; its full sequence is Photosystem II reaction center protein M (37 aa).

Residues 7–27 (GFIAVLMFLAIPTAFLLIPYV) traverse the membrane as a helical segment.

This sequence belongs to the PsbM family. PSII is composed of 1 copy each of membrane proteins PsbA, PsbB, PsbC, PsbD, PsbE, PsbF, PsbH, PsbI, PsbJ, PsbK, PsbL, PsbM, PsbT, PsbX, PsbY, PsbZ, Psb30/Ycf12, at least 3 peripheral proteins of the oxygen-evolving complex and a large number of cofactors. It forms dimeric complexes.

The protein localises to the plastid. The protein resides in the chloroplast thylakoid membrane. Its function is as follows. One of the components of the core complex of photosystem II (PSII). PSII is a light-driven water:plastoquinone oxidoreductase that uses light energy to abstract electrons from H(2)O, generating O(2) and a proton gradient subsequently used for ATP formation. It consists of a core antenna complex that captures photons, and an electron transfer chain that converts photonic excitation into a charge separation. This subunit is found at the monomer-monomer interface. This Pinus koraiensis (Korean pine) protein is Photosystem II reaction center protein M.